Here is a 286-residue protein sequence, read N- to C-terminus: ATP synthase gamma chain (286 aa).

It belongs to the ATPase gamma chain family. F-type ATPases have 2 components, CF(1) - the catalytic core - and CF(0) - the membrane proton channel. CF(1) has five subunits: alpha(3), beta(3), gamma(1), delta(1), epsilon(1). CF(0) has three main subunits: a, b and c.

Its subcellular location is the cell inner membrane. Its function is as follows. Produces ATP from ADP in the presence of a proton gradient across the membrane. The gamma chain is believed to be important in regulating ATPase activity and the flow of protons through the CF(0) complex. This Shewanella oneidensis (strain ATCC 700550 / JCM 31522 / CIP 106686 / LMG 19005 / NCIMB 14063 / MR-1) protein is ATP synthase gamma chain.